The primary structure comprises 399 residues: Dual-specificity RNA methyltransferase RlmN (399 aa).

Glutamate 122 acts as the Proton acceptor in catalysis. Residues 128–371 (ETDRGTLCVS…VRTPRGRDIL (244 aa)) form the Radical SAM core domain. The cysteines at positions 135 and 374 are disulfide-linked. 3 residues coordinate [4Fe-4S] cluster: cysteine 142, cysteine 146, and cysteine 149. Residues 200–201 (GE), serine 232, 254–256 (SLH), and asparagine 331 contribute to the S-adenosyl-L-methionine site. Cysteine 374 serves as the catalytic S-methylcysteine intermediate.

Belongs to the radical SAM superfamily. RlmN family. Requires [4Fe-4S] cluster as cofactor.

It localises to the cytoplasm. It catalyses the reaction adenosine(2503) in 23S rRNA + 2 reduced [2Fe-2S]-[ferredoxin] + 2 S-adenosyl-L-methionine = 2-methyladenosine(2503) in 23S rRNA + 5'-deoxyadenosine + L-methionine + 2 oxidized [2Fe-2S]-[ferredoxin] + S-adenosyl-L-homocysteine. It carries out the reaction adenosine(37) in tRNA + 2 reduced [2Fe-2S]-[ferredoxin] + 2 S-adenosyl-L-methionine = 2-methyladenosine(37) in tRNA + 5'-deoxyadenosine + L-methionine + 2 oxidized [2Fe-2S]-[ferredoxin] + S-adenosyl-L-homocysteine. In terms of biological role, specifically methylates position 2 of adenine 2503 in 23S rRNA and position 2 of adenine 37 in tRNAs. m2A2503 modification seems to play a crucial role in the proofreading step occurring at the peptidyl transferase center and thus would serve to optimize ribosomal fidelity. The protein is Dual-specificity RNA methyltransferase RlmN of Rhodopseudomonas palustris (strain ATCC BAA-98 / CGA009).